Here is a 309-residue protein sequence, read N- to C-terminus: Thiamine-monophosphate kinase (309 aa).

Positions 25, 39, 40, and 41 each coordinate Mg(2+). Position 48 (Asp48) interacts with substrate. Asp69 and Asp117 together coordinate Mg(2+). Residues 116-117 and Arg140 contribute to the ATP site; that span reads GD. Residue Asp201 participates in Mg(2+) binding. Ser203 contributes to the ATP binding site. Position 204 (Asp204) interacts with Mg(2+). Positions 250 and 298 each coordinate substrate.

It belongs to the thiamine-monophosphate kinase family.

The catalysed reaction is thiamine phosphate + ATP = thiamine diphosphate + ADP. It functions in the pathway cofactor biosynthesis; thiamine diphosphate biosynthesis; thiamine diphosphate from thiamine phosphate: step 1/1. Catalyzes the ATP-dependent phosphorylation of thiamine-monophosphate (TMP) to form thiamine-pyrophosphate (TPP), the active form of vitamin B1. In Pyrococcus horikoshii (strain ATCC 700860 / DSM 12428 / JCM 9974 / NBRC 100139 / OT-3), this protein is Thiamine-monophosphate kinase.